We begin with the raw amino-acid sequence, 304 residues long: Ribosomal RNA small subunit methyltransferase H (304 aa).

S-adenosyl-L-methionine is bound by residues 37–39 (GGH), Asp-57, Phe-79, Asp-100, and His-107.

This sequence belongs to the methyltransferase superfamily. RsmH family.

It localises to the cytoplasm. It catalyses the reaction cytidine(1402) in 16S rRNA + S-adenosyl-L-methionine = N(4)-methylcytidine(1402) in 16S rRNA + S-adenosyl-L-homocysteine + H(+). Specifically methylates the N4 position of cytidine in position 1402 (C1402) of 16S rRNA. The protein is Ribosomal RNA small subunit methyltransferase H of Bacteroides fragilis (strain YCH46).